Here is a 100-residue protein sequence, read N- to C-terminus: Integration host factor subunit alpha (100 aa).

Belongs to the bacterial histone-like protein family. Heterodimer of an alpha and a beta chain.

In terms of biological role, this protein is one of the two subunits of integration host factor, a specific DNA-binding protein that functions in genetic recombination as well as in transcriptional and translational control. The polypeptide is Integration host factor subunit alpha (Caulobacter vibrioides (strain ATCC 19089 / CIP 103742 / CB 15) (Caulobacter crescentus)).